A 367-amino-acid chain; its full sequence is Queuine tRNA-ribosyltransferase (367 aa).

Asp-92 serves as the catalytic Proton acceptor. Residues 92-96 (DSGGF), Asp-146, Gln-188, and Gly-215 each bind substrate. An RNA binding region spans residues 246–252 (GVGTPKD). Asp-265 acts as the Nucleophile in catalysis. 4 residues coordinate Zn(2+): Cys-303, Cys-305, Cys-308, and His-334.

The protein belongs to the queuine tRNA-ribosyltransferase family. Homodimer. Within each dimer, one monomer is responsible for RNA recognition and catalysis, while the other monomer binds to the replacement base PreQ1. Zn(2+) is required as a cofactor.

The enzyme catalyses 7-aminomethyl-7-carbaguanine + guanosine(34) in tRNA = 7-aminomethyl-7-carbaguanosine(34) in tRNA + guanine. It functions in the pathway tRNA modification; tRNA-queuosine biosynthesis. Its function is as follows. Catalyzes the base-exchange of a guanine (G) residue with the queuine precursor 7-aminomethyl-7-deazaguanine (PreQ1) at position 34 (anticodon wobble position) in tRNAs with GU(N) anticodons (tRNA-Asp, -Asn, -His and -Tyr). Catalysis occurs through a double-displacement mechanism. The nucleophile active site attacks the C1' of nucleotide 34 to detach the guanine base from the RNA, forming a covalent enzyme-RNA intermediate. The proton acceptor active site deprotonates the incoming PreQ1, allowing a nucleophilic attack on the C1' of the ribose to form the product. After dissociation, two additional enzymatic reactions on the tRNA convert PreQ1 to queuine (Q), resulting in the hypermodified nucleoside queuosine (7-(((4,5-cis-dihydroxy-2-cyclopenten-1-yl)amino)methyl)-7-deazaguanosine). This chain is Queuine tRNA-ribosyltransferase, found in Francisella tularensis subsp. novicida (strain U112).